A 357-amino-acid chain; its full sequence is Isopentenyl-diphosphate delta-isomerase (357 aa).

6–7 lines the substrate pocket; that stretch reads RK. FMN-binding positions include S62, 63-65, S93, and N122; that span reads AMT. Residue 93 to 95 coordinates substrate; that stretch reads SQR. Position 156 (Q156) interacts with substrate. E157 lines the Mg(2+) pocket. FMN is bound by residues K186, T216, 267-269, and 288-289; these read GVR and AL.

Belongs to the IPP isomerase type 2 family. In terms of assembly, homooctamer. Dimer of tetramers. FMN serves as cofactor. The cofactor is NADPH. Mg(2+) is required as a cofactor.

Its subcellular location is the cytoplasm. The catalysed reaction is isopentenyl diphosphate = dimethylallyl diphosphate. In terms of biological role, involved in the biosynthesis of isoprenoids. Catalyzes the 1,3-allylic rearrangement of the homoallylic substrate isopentenyl (IPP) to its allylic isomer, dimethylallyl diphosphate (DMAPP). The sequence is that of Isopentenyl-diphosphate delta-isomerase from Methanothrix thermoacetophila (strain DSM 6194 / JCM 14653 / NBRC 101360 / PT) (Methanosaeta thermophila).